The sequence spans 880 residues: uncharacterized protein (880 aa).

10 disordered regions span residues 101–149, 191–224, 240–273, 294–350, 425–446, 470–508, 536–561, 580–613, 682–713, and 844–880; these read KPIP…LRSE, PETS…ISTH, TTTT…PILK, NSNS…STTS, QPDS…ESQP, STST…SSSS, MESS…NDNS, APQS…NDDE, NTNT…NINN, and NSSG…KSEI. Positions 113–147 form a coiled coil; that stretch reads ISIKEKEKEKEKEKEKEKEKEKEKEKEMKSTINLR. Over residues 115–149 the composition is skewed to basic and acidic residues; that stretch reads IKEKEKEKEKEKEKEKEKEKEKEKEMKSTINLRSE. 2 stretches are compositionally biased toward low complexity: residues 193–223 and 240–256; these read TSTP…SIST and TTTT…PSSS. The span at 257 to 271 shows a compositional bias: polar residues; it reads IAGITNPTSRSSSPI. Positions 294 to 332 are enriched in low complexity; that stretch reads NSNSSSGGGNNNNKSISTPSSPIISRPITNKINNNNNNN. Residues 333-342 are compositionally biased toward polar residues; it reads QPQLHYNQPQ. The span at 536-548 shows a compositional bias: low complexity; that stretch reads MESSTTTTLLSEN. The span at 589 to 613 shows a compositional bias: acidic residues; that stretch reads QPEDDPFFDFEDLSDDDDSNDNDDE. The span at 844–864 shows a compositional bias: low complexity; that stretch reads NSSGSGNNSNDNSGSSSPSSS. Over residues 865 to 880 the composition is skewed to polar residues; it reads KTNTLNQQSICIKSEI.

This is an uncharacterized protein from Dictyostelium discoideum (Social amoeba).